The chain runs to 106 residues: uncharacterized protein (106 aa).

Positions Met1 to Ala46 are disordered.

This is an uncharacterized protein from Gracula (BFDV).